Consider the following 862-residue polypeptide: MPRQSISKESPTMTTPMMQQYKSIKSQAPDAILFFRLGDFYEMFGEDARTAAPILEIALTGRDSGGGERIPMCGVPHHAVDGYLLKLVSAGYKVALCEQVEDPQAAKGIVKREIIRIISPGTLTDSLVEQANNFLAAVYHEQDWGLAFVDVSTGEFTVFQTESLDILTTELSRIRPSELLLPAELLKAKHWRPYYLTQREKKTYQHTLLEERFTEQRELFQEFPTAMKAANGLWQYILETSPGIDPSHILKVNAYRPEHWMLLDPWTRRNLELTESIRGQGKKGTLLSVLDFTKTAFGGRLLRRWIEQPLLLKGEIEKRLDYVEALVEDSFLRGDLIQLFGKVYDLERLMGKVSYGTANARDLLSLAQTLGVLPQLRALLAEGKSEPLQAFIPALEGLDPLAATLEQAINPEAPISLKDGNLLKAGYSVEIDELRSISSGGKAWVAKLESMEKDRTGIRSLKVGYNKVFGYYIEVTHANSHLIPAEYIRKQTLANAERFITPELKEYEQKILGAEEKVTQLEYQLFLELRETVRGQAAKILEAAHALAEIDVYTSLAEAAVRHHYSRPVMKGEGGLTIIEGRHPVVESMLQDTSFVPNDTILTEDKHLALITGPNMAGKSTYMRQVALIVLMAQIGSFVPAQQATIPIADHIFTRVGASDDLASGQSTFMVEMYEVAHILRHVTPQSLIILDEVGRGTATYDGLSIAWAVAEYLAGQENKPKTLFATHYHELTDLEETHSGIFNLHVGVREHGEEIVFLHKIIPGRADRSYGIQVAKLAGLPANLLHRAKIILHELESSAKESRQEHLFNKEKATQLSLFEVQPLDPLLQEVSELSVEDLTPRQALDYLFDLKERIKAADSL.

613-620 (GPNMAGKS) is a binding site for ATP.

This sequence belongs to the DNA mismatch repair MutS family.

Its function is as follows. This protein is involved in the repair of mismatches in DNA. It is possible that it carries out the mismatch recognition step. This protein has a weak ATPase activity. This is DNA mismatch repair protein MutS from Desulfitobacterium hafniense (strain Y51).